A 516-amino-acid polypeptide reads, in one-letter code: GMP synthase [glutamine-hydrolyzing] (516 aa).

A Glutamine amidotransferase type-1 domain is found at 8–198 (KILILDFGSQ…VVNICGCDTL (191 aa)). Cys-84 acts as the Nucleophile in catalysis. Residues His-172 and Glu-174 contribute to the active site. In terms of domain architecture, GMPS ATP-PPase spans 199–391 (WNIENIIEND…LGLPYNMLYR (193 aa)). 226-232 (SGGVDSS) serves as a coordination point for ATP.

As to quaternary structure, homodimer.

It carries out the reaction XMP + L-glutamine + ATP + H2O = GMP + L-glutamate + AMP + diphosphate + 2 H(+). It functions in the pathway purine metabolism; GMP biosynthesis; GMP from XMP (L-Gln route): step 1/1. In terms of biological role, catalyzes the synthesis of GMP from XMP. This is GMP synthase [glutamine-hydrolyzing] from Francisella tularensis subsp. tularensis (strain FSC 198).